Consider the following 274-residue polypeptide: NAD kinase (274 aa).

Asp61 functions as the Proton acceptor in the catalytic mechanism. NAD(+)-binding positions include Asp61–Gly62, Lys66, Asn134–Asp135, Lys145, Asp164, and Thr175–Ser180.

The protein belongs to the NAD kinase family. Requires a divalent metal cation as cofactor.

Its subcellular location is the cytoplasm. It carries out the reaction NAD(+) + ATP = ADP + NADP(+) + H(+). Involved in the regulation of the intracellular balance of NAD and NADP, and is a key enzyme in the biosynthesis of NADP. Catalyzes specifically the phosphorylation on 2'-hydroxyl of the adenosine moiety of NAD to yield NADP. In Clostridium tetani (strain Massachusetts / E88), this protein is NAD kinase.